Reading from the N-terminus, the 127-residue chain is Large ribosomal subunit protein uL24A (127 aa).

The protein belongs to the universal ribosomal protein uL24 family. As to quaternary structure, component of the large ribosomal subunit (LSU). Mature yeast ribosomes consist of a small (40S) and a large (60S) subunit. The 40S small subunit contains 1 molecule of ribosomal RNA (18S rRNA) and 33 different proteins (encoded by 57 genes). The large 60S subunit contains 3 rRNA molecules (25S, 5.8S and 5S rRNA) and 46 different proteins (encoded by 81 genes).

The protein localises to the cytoplasm. Component of the ribosome, a large ribonucleoprotein complex responsible for the synthesis of proteins in the cell. The small ribosomal subunit (SSU) binds messenger RNAs (mRNAs) and translates the encoded message by selecting cognate aminoacyl-transfer RNA (tRNA) molecules. The large subunit (LSU) contains the ribosomal catalytic site termed the peptidyl transferase center (PTC), which catalyzes the formation of peptide bonds, thereby polymerizing the amino acids delivered by tRNAs into a polypeptide chain. The nascent polypeptides leave the ribosome through a tunnel in the LSU and interact with protein factors that function in enzymatic processing, targeting, and the membrane insertion of nascent chains at the exit of the ribosomal tunnel. The polypeptide is Large ribosomal subunit protein uL24A (Saccharomyces cerevisiae (strain ATCC 204508 / S288c) (Baker's yeast)).